Reading from the N-terminus, the 471-residue chain is 6-phosphofructo-2-kinase/fructose-2,6-bisphosphatase 1 (471 aa).

Residue S2 is modified to N-acetylserine. The segment at 2 to 250 (SPEMGELTQT…VYYLMNIHVT (249 aa)) is 6-phosphofructo-2-kinase. S33 is modified (phosphoserine; by PKA). 49–57 (GLPARGKTY) is an ATP binding site. R82 and R105 together coordinate beta-D-fructose 6-phosphate. Residue D131 is part of the active site. Positions 133 and 139 each coordinate beta-D-fructose 6-phosphate. S141 carries the phosphoserine modification. C161 is a catalytic residue. Position 170–175 (170–175 (NIRQVK)) interacts with ATP. Beta-D-fructose 6-phosphate-binding residues include K175, R196, and Y200. Positions 251–471 (PRSIYLCRHG…EALDTVPAHY (221 aa)) are fructose-2,6-bisphosphatase. R258 lines the beta-D-fructose 2,6-bisphosphate pocket. Residue H259 is the Tele-phosphohistidine intermediate of the active site. Beta-D-fructose 2,6-bisphosphate contacts are provided by N265, G271, and R308. E328 serves as the catalytic Proton donor/acceptor. Positions 339, 353, 357, 368, 394, and 398 each coordinate beta-D-fructose 2,6-bisphosphate. 350 to 353 (FALR) contacts ATP. ATP-binding positions include 394 to 398 (QAVMR) and Y430.

It in the C-terminal section; belongs to the phosphoglycerate mutase family. Homodimer. Liver.

It catalyses the reaction beta-D-fructose 2,6-bisphosphate + H2O = beta-D-fructose 6-phosphate + phosphate. The enzyme catalyses beta-D-fructose 6-phosphate + ATP = beta-D-fructose 2,6-bisphosphate + ADP + H(+). Phosphorylation at Ser-33 inhibits the kinase and activates the bisphosphatase. Functionally, synthesis and degradation of fructose 2,6-bisphosphate. This chain is 6-phosphofructo-2-kinase/fructose-2,6-bisphosphatase 1, found in Homo sapiens (Human).